A 473-amino-acid polypeptide reads, in one-letter code: FAD-dependent monooxygeanse terM (473 aa).

A signal peptide spans 1-22; sequence MSENFKVLIIGGSVAGLTLALC. FAD is bound by residues E34, G48, R107, D303, and A316. Residues 441 to 461 traverse the membrane as a helical segment; sequence VLYLICGALLAWWASGLVWHF.

It belongs to the paxM FAD-dependent monooxygenase family. It depends on FAD as a cofactor.

The protein localises to the membrane. It functions in the pathway secondary metabolite biosynthesis. Its function is as follows. FAD-dependent monooxygeanse; part of the gene cluster that mediates the biosynthesis of terpendoles, indole-diterpene (IDT) mycotoxins including terpendole I, terpendole K, terpendole C, as well as the kinesin Eg5 inhibitor terpendole E. Terpendoles biosynthesis begins with the synthesis of geranylgeranyl diphosphate (GGPP) by a yet unidentified GGPP synthase. Condensation of indole-3-glycerol phosphate with GGPP by the prenyltransferase terC then forms 3-geranylgeranylindole (3-GGI), followed by epoxidation and cyclization of this intermediate (by the FAD-dependent monooxygeanse terM and the terpene cyclase terB) to form paspaline. The cytochrome monooxygenase terQ then hydroxylates paspalline at C-11 to yield terpendole E. The cytochrome monooxygenase terP converts terpendole E to 13-desoxyterpendole I, and terQ converts 13-desoxyterpendole I into terpendole I. TerF and terK are required for conversion of terpendole I to terpendole C which is further converted to terpendole K. This Tolypocladium album (Soil fungus) protein is FAD-dependent monooxygeanse terM.